Consider the following 66-residue polypeptide: Type 3 secretion system chaperone YscE (66 aa).

Belongs to the YscE family. In terms of assembly, component of the heterodimeric YscE-YscG chaperone. The YscE-YscG chaperone forms a stable ternary complex with YscF/SctF.

It localises to the cytoplasm. In terms of biological role, chaperone of the type III secretion system (T3SS), also called injectisome, which is used to inject bacterial effector proteins into eukaryotic host cells. Along with YscG, prevents premature polymerization of the YscF/SctF needle protein within the cytoplasm. Required for Yop secretion. In Yersinia enterocolitica, this protein is Type 3 secretion system chaperone YscE.